A 1335-amino-acid polypeptide reads, in one-letter code: Xanthine dehydrogenase/oxidase (1335 aa).

A 2Fe-2S ferredoxin-type domain is found at 7–94; it reads DELVFFVNGK…HVAVTTVEGI (88 aa). Residues Cys-46, Cys-51, Cys-54, Cys-76, Cys-115, Cys-118, Cys-150, and Cys-152 each coordinate [2Fe-2S] cluster. The FAD-binding PCMH-type domain maps to 231–416; the sequence is FEGERVTWIQ…VSIVIPYSRK (186 aa). Residues 259 to 266, Phe-339, 349 to 353, Asp-362, Leu-406, and Lys-424 each bind FAD; these read LVVGNTEI and SIGGN. A disulfide bond links Cys-538 and Cys-995. Positions 770 and 801 each coordinate Mo-molybdopterin. Substrate is bound by residues Glu-805 and Arg-883. A Mo-molybdopterin-binding site is contributed by Arg-915. Positions 917 and 1013 each coordinate substrate. Position 1082 (Ala-1082) interacts with Mo-molybdopterin. The Proton acceptor role is filled by Glu-1264.

It belongs to the xanthine dehydrogenase family. In terms of assembly, homodimer. Interacts with BTN1A1. FAD serves as cofactor. Mo-molybdopterin is required as a cofactor. It depends on [2Fe-2S] cluster as a cofactor. Subject to partial proteolysis; this alters the enzyme from the dehydrogenase form (D) to the oxidase form (O). Post-translationally, contains sulfhydryl groups that are easily oxidized (in vitro); this alters the enzyme from the dehydrogenase form (D) to the oxidase form (O).

The protein resides in the cytoplasm. Its subcellular location is the peroxisome. It localises to the secreted. The enzyme catalyses xanthine + NAD(+) + H2O = urate + NADH + H(+). It catalyses the reaction hypoxanthine + NAD(+) + H2O = xanthine + NADH + H(+). It carries out the reaction xanthine + O2 + H2O = urate + H2O2. Its activity is regulated as follows. Can be converted from the dehydrogenase form (D) to the oxidase form (O) irreversibly by proteolysis or reversibly through the oxidation of sulfhydryl groups. In terms of biological role, key enzyme in purine degradation. Catalyzes the oxidation of hypoxanthine to xanthine. Catalyzes the oxidation of xanthine to uric acid. Contributes to the generation of reactive oxygen species. The sequence is that of Xanthine dehydrogenase/oxidase (Xdh) from Mus musculus (Mouse).